Consider the following 332-residue polypeptide: Geranylgeranyl diphosphate synthase (332 aa).

Isopentenyl diphosphate is bound by residues Lys-45, Arg-48, and His-77. 2 residues coordinate Mg(2+): Asp-84 and Asp-88. Residue Arg-93 coordinates an all-trans-polyprenyl diphosphate. Arg-94 serves as a coordination point for isopentenyl diphosphate. The an all-trans-polyprenyl diphosphate site is built by Lys-177, Thr-178, Gln-215, Lys-232, and Lys-242.

Belongs to the FPP/GGPP synthase family. Mg(2+) serves as cofactor.

It carries out the reaction isopentenyl diphosphate + (2E,6E)-farnesyl diphosphate = (2E,6E,10E)-geranylgeranyl diphosphate + diphosphate. It functions in the pathway isoprenoid biosynthesis; geranylgeranyl diphosphate biosynthesis; geranylgeranyl diphosphate from farnesyl diphosphate and isopentenyl diphosphate: step 1/1. Functionally, catalyzes the condensation of isopentenyl pyrophosphate with the allylic pyrophosphates to yield geranylgeranyl diphosphate (GGPP) which is a precursor of the ether-linked lipids. This Saccharolobus solfataricus (strain ATCC 35092 / DSM 1617 / JCM 11322 / P2) (Sulfolobus solfataricus) protein is Geranylgeranyl diphosphate synthase (gds).